A 455-amino-acid chain; its full sequence is Differentiation-associated protein 1 (455 aa).

Positions 1-21 (MKFKLFLLVFFVFLLPYLSQS) are cleaved as a signal peptide. Positions 349–434 (IGSSSSSSSS…SDDDLGNPSS (86 aa)) are disordered. The segment covering 351 to 423 (SSSSSSSSSS…KSNHTSSESS (73 aa)) has biased composition (low complexity). S433 is lipidated: GPI-like-anchor amidated serine. A propeptide spans 434-455 (SSSILSVSKLIILLISIILYCF) (removed in mature form).

The protein resides in the cell membrane. Functionally, plays a role in differentiation. The sequence is that of Differentiation-associated protein 1 (dia1) from Dictyostelium discoideum (Social amoeba).